We begin with the raw amino-acid sequence, 330 residues long: Probable allantoicase (330 aa).

This sequence belongs to the allantoicase family.

The enzyme catalyses allantoate + H2O = (S)-ureidoglycolate + urea. The protein operates within nitrogen metabolism; (S)-allantoin degradation; (S)-ureidoglycolate from allantoate (aminidohydrolase route): step 1/1. The sequence is that of Probable allantoicase from Photobacterium profundum (strain SS9).